Reading from the N-terminus, the 203-residue chain is Glycerol-3-phosphate acyltransferase (203 aa).

Helical transmembrane passes span 3 to 23 (ILLA…VVVS), 51 to 71 (KAAI…VWLV), 74 to 94 (FGIG…LGHL), 116 to 136 (AVHP…AFFF), 140 to 160 (SLAA…LFGT), and 164 to 178 (PVAW…LLIW).

It belongs to the PlsY family. As to quaternary structure, probably interacts with PlsX.

Its subcellular location is the cell inner membrane. The catalysed reaction is an acyl phosphate + sn-glycerol 3-phosphate = a 1-acyl-sn-glycero-3-phosphate + phosphate. It functions in the pathway lipid metabolism; phospholipid metabolism. Functionally, catalyzes the transfer of an acyl group from acyl-phosphate (acyl-PO(4)) to glycerol-3-phosphate (G3P) to form lysophosphatidic acid (LPA). This enzyme utilizes acyl-phosphate as fatty acyl donor, but not acyl-CoA or acyl-ACP. This Burkholderia mallei (strain ATCC 23344) protein is Glycerol-3-phosphate acyltransferase.